Reading from the N-terminus, the 546-residue chain is Chaperonin GroEL (546 aa).

ATP contacts are provided by residues 30 to 33, lysine 51, 87 to 91, glycine 415, 479 to 481, and aspartate 495; these read TLGP, DGTTT, and NAA.

This sequence belongs to the chaperonin (HSP60) family. As to quaternary structure, forms a cylinder of 14 subunits composed of two heptameric rings stacked back-to-back. Interacts with the co-chaperonin GroES.

The protein localises to the cytoplasm. The enzyme catalyses ATP + H2O + a folded polypeptide = ADP + phosphate + an unfolded polypeptide.. Its function is as follows. Together with its co-chaperonin GroES, plays an essential role in assisting protein folding. The GroEL-GroES system forms a nano-cage that allows encapsulation of the non-native substrate proteins and provides a physical environment optimized to promote and accelerate protein folding. The sequence is that of Chaperonin GroEL from Azotobacter vinelandii.